The sequence spans 177 residues: Large ribosomal subunit protein uL6 (177 aa).

The protein belongs to the universal ribosomal protein uL6 family. As to quaternary structure, part of the 50S ribosomal subunit.

Its function is as follows. This protein binds to the 23S rRNA, and is important in its secondary structure. It is located near the subunit interface in the base of the L7/L12 stalk, and near the tRNA binding site of the peptidyltransferase center. The polypeptide is Large ribosomal subunit protein uL6 (Magnetococcus marinus (strain ATCC BAA-1437 / JCM 17883 / MC-1)).